The sequence spans 464 residues: Kynureninase 2 (464 aa).

Pyridoxal 5'-phosphate-binding positions include L135, T136, 163-166 (FPSD), D248, H251, and Y273. K274 carries the N6-(pyridoxal phosphate)lysine modification. Pyridoxal 5'-phosphate-binding residues include W313 and N341.

Belongs to the kynureninase family. Homodimer. It depends on pyridoxal 5'-phosphate as a cofactor.

The protein resides in the cytoplasm. The enzyme catalyses L-kynurenine + H2O = anthranilate + L-alanine + H(+). The catalysed reaction is 3-hydroxy-L-kynurenine + H2O = 3-hydroxyanthranilate + L-alanine + H(+). The protein operates within amino-acid degradation; L-kynurenine degradation; L-alanine and anthranilate from L-kynurenine: step 1/1. It functions in the pathway cofactor biosynthesis; NAD(+) biosynthesis; quinolinate from L-kynurenine: step 2/3. Its function is as follows. Catalyzes the cleavage of L-kynurenine (L-Kyn) and L-3-hydroxykynurenine (L-3OHKyn) into anthranilic acid (AA) and 3-hydroxyanthranilic acid (3-OHAA), respectively. The protein is Kynureninase 2 (bna5-2) of Aspergillus clavatus (strain ATCC 1007 / CBS 513.65 / DSM 816 / NCTC 3887 / NRRL 1 / QM 1276 / 107).